A 370-amino-acid chain; its full sequence is UDP-N-acetylglucosamine--N-acetylmuramyl-(pentapeptide) pyrophosphoryl-undecaprenol N-acetylglucosamine transferase (370 aa).

UDP-N-acetyl-alpha-D-glucosamine-binding positions include 15 to 17 (TGG), N129, R170, S199, I254, and Q299.

Belongs to the glycosyltransferase 28 family. MurG subfamily.

The protein resides in the cell inner membrane. It catalyses the reaction di-trans,octa-cis-undecaprenyl diphospho-N-acetyl-alpha-D-muramoyl-L-alanyl-D-glutamyl-meso-2,6-diaminopimeloyl-D-alanyl-D-alanine + UDP-N-acetyl-alpha-D-glucosamine = di-trans,octa-cis-undecaprenyl diphospho-[N-acetyl-alpha-D-glucosaminyl-(1-&gt;4)]-N-acetyl-alpha-D-muramoyl-L-alanyl-D-glutamyl-meso-2,6-diaminopimeloyl-D-alanyl-D-alanine + UDP + H(+). The protein operates within cell wall biogenesis; peptidoglycan biosynthesis. Its function is as follows. Cell wall formation. Catalyzes the transfer of a GlcNAc subunit on undecaprenyl-pyrophosphoryl-MurNAc-pentapeptide (lipid intermediate I) to form undecaprenyl-pyrophosphoryl-MurNAc-(pentapeptide)GlcNAc (lipid intermediate II). The sequence is that of UDP-N-acetylglucosamine--N-acetylmuramyl-(pentapeptide) pyrophosphoryl-undecaprenol N-acetylglucosamine transferase from Magnetococcus marinus (strain ATCC BAA-1437 / JCM 17883 / MC-1).